The sequence spans 44 residues: uncharacterized protein (44 aa).

This is an uncharacterized protein from His1 virus (isolate Australia/Victoria) (His1V).